Here is a 196-residue protein sequence, read N- to C-terminus: Small heat shock protein C3 (196 aa).

Residues 88–196 enclose the sHSP domain; the sequence is SAYSSSAIRT…EKDAKEIPIQ (109 aa).

It belongs to the small heat shock protein (HSP20) family.

The protein is Small heat shock protein C3 (hspc3-1) of Rickettsia felis (strain ATCC VR-1525 / URRWXCal2) (Rickettsia azadi).